The sequence spans 317 residues: D-alanine--D-alanine ligase (317 aa).

One can recognise an ATP-grasp domain in the interval 111 to 308 (KRFWNGIGIP…YASLVEKIAQ (198 aa)). 137 to 192 (EEQMSYPVIVKPSREGSTIGINKAMNRAELDDALIKALEYDSDILVEEFIDGPEFT) provides a ligand contact to ATP. Residues D262, E275, and N277 each contribute to the Mg(2+) site.

The protein belongs to the D-alanine--D-alanine ligase family. It depends on Mg(2+) as a cofactor. Mn(2+) is required as a cofactor.

It localises to the cytoplasm. The enzyme catalyses 2 D-alanine + ATP = D-alanyl-D-alanine + ADP + phosphate + H(+). The protein operates within cell wall biogenesis; peptidoglycan biosynthesis. Cell wall formation. This is D-alanine--D-alanine ligase from Marinomonas sp. (strain MWYL1).